We begin with the raw amino-acid sequence, 246 residues long: Uridylate kinase (246 aa).

18–21 (KLSG) is an ATP binding site. UMP is bound at residue G60. ATP contacts are provided by G61 and R65. Residues D80 and 141-148 (TGNPFFTT) each bind UMP. Positions 168, 174, and 177 each coordinate ATP.

The protein belongs to the UMP kinase family. In terms of assembly, homohexamer.

It is found in the cytoplasm. It carries out the reaction UMP + ATP = UDP + ADP. It participates in pyrimidine metabolism; CTP biosynthesis via de novo pathway; UDP from UMP (UMPK route): step 1/1. With respect to regulation, inhibited by UTP. Catalyzes the reversible phosphorylation of UMP to UDP. In Pseudomonas syringae pv. syringae (strain B728a), this protein is Uridylate kinase.